The primary structure comprises 534 residues: Serine/threonine-protein kinase NLK (534 aa).

2 sufficient for interaction with DAPK3 regions span residues 8–132 (LVSC…KAHH) and 131–423 (HHHQ…SKRI). Required for interaction with TAB2 stretches follow at residues 8-311 (LVSC…VVTQ) and 441-534 (YHTC…LVWE). Disordered stretches follow at residues 29 to 79 (AAAA…SSAA) and 97 to 147 (QQPY…DIEP). A compositionally biased stretch (basic residues) spans 33-61 (GHHHHHHHHLPHLPPPHLHHHHHPQHHLH). The segment covering 110-126 (PGPAAAAPAQVQAAAAA) has biased composition (low complexity). Positions 129–138 (KAHHHQHSHH) are enriched in basic residues. A Protein kinase domain is found at 145–434 (IEPDRPIGYG…AKDALAHPYL (290 aa)). ATP-binding positions include 151–159 (IGYGAFGVV) and Lys174. Residue Asp271 is the Proton acceptor of the active site. Thr305 carries the phosphothreonine; by autocatalysis modification. The TQE motif lies at 305–307 (TQE). Residues 435–534 (DEGRLRYHTC…EMPPSPLVWE (100 aa)) form a required for homodimerization and kinase activation and localization to the nucleus region. Ser529 carries the phosphoserine modification.

It belongs to the protein kinase superfamily. CMGC Ser/Thr protein kinase family. MAP kinase subfamily. As to quaternary structure, homodimer. Homodimerization is required for intermolecular autophosphorylation, kinase activation and nuclear localization. May interact with components of cullin-RING-based SCF (SKP1-CUL1-F-box protein) E3 ubiquitin-protein ligase complexes. Interacts with LEF1, MEF2A, MYBL1 and MYBL2. Interacts with the upstream activating kinases HIPK2 and MAP3K7/TAK1. Interaction with MAP3K7/TAK1 seems to be indirect, and may be mediated by other proteins such as STAT3, TAB1 and TAB2. Interacts with and phosphorylates a number of transcription factors including FOXO1, FOXO3, FOXO4, MYB, NOTCH1 and TCF7L2/TCF4. Interacts with DAPK3/ZIPK, and this interaction may disrupt interaction with transcription factors such as TCF7L2/TCF4. Forms a transcriptional repressor complex with CHD7, PPARG and SETDB1. Interacts with RNF138/NARF. Interacts with ATF5; the interaction stabilizes ATF5 at the protein level in a kinase-independent manner. Mg(2+) is required as a cofactor. In terms of processing, phosphorylated on Thr-305. Intermolecular autophosphorylation on Thr-305 activates the enzyme.

The protein resides in the nucleus. It localises to the cytoplasm. The enzyme catalyses L-seryl-[protein] + ATP = O-phospho-L-seryl-[protein] + ADP + H(+). It catalyses the reaction L-threonyl-[protein] + ATP = O-phospho-L-threonyl-[protein] + ADP + H(+). With respect to regulation, activated by the non-canonical Wnt signaling pathway, in which WNT5A leads to activation of MAP3K7/TAK1 and HIPK2, which subsequently phosphorylates and activates this protein. Activated by dimerization and subsequent intermolecular autophosphorylation on Thr-305. Other cytokines such as IL6 may also activate this regulatory circuit. Functionally, serine/threonine-protein kinase that regulates a number of transcription factors with key roles in cell fate determination. Positive effector of the non-canonical Wnt signaling pathway, acting downstream of WNT5A, MAP3K7/TAK1 and HIPK2. Negative regulator of the canonical Wnt/beta-catenin signaling pathway. Binds to and phosphorylates TCF7L2/TCF4 and LEF1, promoting the dissociation of the TCF7L2/LEF1/beta-catenin complex from DNA, as well as the ubiquitination and subsequent proteolysis of LEF1. Together these effects inhibit the transcriptional activation of canonical Wnt/beta-catenin target genes. Negative regulator of the Notch signaling pathway. Binds to and phosphorylates NOTCH1, thereby preventing the formation of a transcriptionally active ternary complex of NOTCH1, RBPJ/RBPSUH and MAML1. Negative regulator of the MYB family of transcription factors. Phosphorylation of MYB leads to its subsequent proteolysis while phosphorylation of MYBL1 and MYBL2 inhibits their interaction with the coactivator CREBBP. Other transcription factors may also be inhibited by direct phosphorylation of CREBBP itself. Acts downstream of IL6 and MAP3K7/TAK1 to phosphorylate STAT3, which is in turn required for activation of NLK by MAP3K7/TAK1. Upon IL1B stimulus, cooperates with ATF5 to activate the transactivation activity of C/EBP subfamily members. Phosphorylates ATF5 but also stabilizes ATF5 protein levels in a kinase-independent manner. Acts as an inhibitor of the mTORC1 complex in response to osmotic stress by mediating phosphorylation of RPTOR, thereby preventing recruitment of the mTORC1 complex to lysosomes. The sequence is that of Serine/threonine-protein kinase NLK (NLK) from Bos taurus (Bovine).